The sequence spans 519 residues: Methionine--tRNA ligase (519 aa).

Positions 11 to 21 (AYPNAAPHVGH) match the 'HIGH' region motif. The 'KMSKS' region signature appears at 299-303 (KMSKS). K302 serves as a coordination point for ATP. The disordered stretch occupies residues 500–519 (LPPPTGVFPRYQPPQPPEGK).

The protein belongs to the class-I aminoacyl-tRNA synthetase family. MetG type 2B subfamily. As to quaternary structure, monomer.

The protein localises to the cytoplasm. The catalysed reaction is tRNA(Met) + L-methionine + ATP = L-methionyl-tRNA(Met) + AMP + diphosphate. In terms of biological role, is required not only for elongation of protein synthesis but also for the initiation of all mRNA translation through initiator tRNA(fMet) aminoacylation. This Mycobacterium tuberculosis (strain CDC 1551 / Oshkosh) protein is Methionine--tRNA ligase (metG).